The sequence spans 483 residues: Kynureninase 1 (483 aa).

Pyridoxal 5'-phosphate-binding positions include leucine 147, threonine 148, 175–178 (FPSD), serine 232, aspartate 261, histidine 264, and tyrosine 286. An N6-(pyridoxal phosphate)lysine modification is found at lysine 287. Pyridoxal 5'-phosphate-binding residues include tryptophan 326 and asparagine 354.

The protein belongs to the kynureninase family. Homodimer. Requires pyridoxal 5'-phosphate as cofactor.

Its subcellular location is the cytoplasm. It catalyses the reaction L-kynurenine + H2O = anthranilate + L-alanine + H(+). It carries out the reaction 3-hydroxy-L-kynurenine + H2O = 3-hydroxyanthranilate + L-alanine + H(+). It participates in amino-acid degradation; L-kynurenine degradation; L-alanine and anthranilate from L-kynurenine: step 1/1. Its pathway is cofactor biosynthesis; NAD(+) biosynthesis; quinolinate from L-kynurenine: step 2/3. In terms of biological role, catalyzes the cleavage of L-kynurenine (L-Kyn) and L-3-hydroxykynurenine (L-3OHKyn) into anthranilic acid (AA) and 3-hydroxyanthranilic acid (3-OHAA), respectively. This is Kynureninase 1 (bna5-1) from Aspergillus terreus (strain NIH 2624 / FGSC A1156).